We begin with the raw amino-acid sequence, 104 residues long: N(4)-acetylcytidine amidohydrolase (104 aa).

The 96-residue stretch at T6–V101 folds into the ASCH domain. K20 (proton acceptor) is an active-site residue. The active-site Nucleophile is the T23. E73 (proton donor) is an active-site residue.

It belongs to the N(4)-acetylcytidine amidohydrolase family.

The enzyme catalyses N(4)-acetylcytidine + H2O = cytidine + acetate + H(+). The catalysed reaction is N(4)-acetyl-2'-deoxycytidine + H2O = 2'-deoxycytidine + acetate + H(+). It carries out the reaction N(4)-acetylcytosine + H2O = cytosine + acetate + H(+). In terms of biological role, catalyzes the hydrolysis of N(4)-acetylcytidine (ac4C). The polypeptide is N(4)-acetylcytidine amidohydrolase (Shewanella oneidensis (strain ATCC 700550 / JCM 31522 / CIP 106686 / LMG 19005 / NCIMB 14063 / MR-1)).